The primary structure comprises 531 residues: uncharacterized protein (531 aa).

The first 22 residues, 1–22, serve as a signal peptide directing secretion; sequence MRLQFKLLGFLTLLGTSTILSA. Cys23 carries N-palmitoyl cysteine lipidation. Cys23 carries S-diacylglycerol cysteine lipidation. Residues 31-51 are disordered; the sequence is EPNNIEESGPITPTTPTTDVP. The span at 40 to 51 shows a compositional bias: low complexity; that stretch reads PITPTTPTTDVP.

It belongs to the MG067/MG068/MG395 family.

Its subcellular location is the cell membrane. This is an uncharacterized protein from Mycoplasma pneumoniae (strain ATCC 29342 / M129 / Subtype 1) (Mycoplasmoides pneumoniae).